The primary structure comprises 431 residues: Adenylosuccinate synthetase (431 aa).

Residues 15-21 (GDEGKGK) and 43-45 (GHT) each bind GTP. The active-site Proton acceptor is the aspartate 16. Residues aspartate 16 and glycine 43 each contribute to the Mg(2+) site. IMP-binding positions include 16-19 (DEGK), 41-44 (NAGH), threonine 135, arginine 149, asparagine 227, threonine 242, and arginine 306. Histidine 44 functions as the Proton donor in the catalytic mechanism. Position 302–308 (302–308 (VTTGRKR)) interacts with substrate. GTP is bound by residues arginine 308, 334-336 (KLD), and 416-418 (GVG).

Belongs to the adenylosuccinate synthetase family. Homodimer. Mg(2+) is required as a cofactor.

The protein localises to the cytoplasm. It carries out the reaction IMP + L-aspartate + GTP = N(6)-(1,2-dicarboxyethyl)-AMP + GDP + phosphate + 2 H(+). It functions in the pathway purine metabolism; AMP biosynthesis via de novo pathway; AMP from IMP: step 1/2. Plays an important role in the de novo pathway and in the salvage pathway of purine nucleotide biosynthesis. Catalyzes the first committed step in the biosynthesis of AMP from IMP. In Monosiga brevicollis (Choanoflagellate), this protein is Adenylosuccinate synthetase.